The primary structure comprises 363 residues: Actin-related protein 7 (363 aa).

Met1 is subject to N-acetylmethionine.

The protein belongs to the actin family. Plant ARP7 subfamily. Mostly expressed in flowers, and, to a lower extent, in roots, seedlings, leaves and siliques (at protein level).

The protein resides in the nucleus. It is found in the cytoplasm. Functionally, essential protein required during embryogenesis and all plant development stages, probably through a chromatin-mediated regulation of gene expression. The sequence is that of Actin-related protein 7 (ARP7) from Arabidopsis thaliana (Mouse-ear cress).